Here is a 1099-residue protein sequence, read N- to C-terminus: Sodium/potassium/calcium exchanger 1 (1099 aa).

Residues methionine 1–glutamine 452 are Extracellular-facing. A compositionally biased stretch (polar residues) spans proline 123–alanine 134. Disordered regions lie at residues proline 123–threonine 150, threonine 169–threonine 199, and proline 284–proline 304. Asparagine 290 carries an N-linked (GlcNAc...) asparagine glycan. Residues glycine 453–cysteine 473 form a helical membrane-spanning segment. The Cytoplasmic segment spans residues aspartate 474–alanine 497. One copy of the Alpha-1 repeat lies at valine 494 to phenylalanine 534. Residues threonine 498–isoleucine 518 traverse the membrane as a helical segment. The Extracellular portion of the chain corresponds to serine 519–asparagine 522. The chain crosses the membrane as a helical span at residues valine 523–cysteine 543. At serine 544–serine 563 the chain is on the cytoplasmic side. A helical transmembrane segment spans residues phenylalanine 564–tryptophan 584. Position 585 (glutamate 585) is a topological domain, extracellular. The helical transmembrane segment at serine 586–isoleucine 606 threads the bilayer. Residues glutamate 607–lysine 907 are Cytoplasmic-facing. At serine 658 the chain carries Phosphoserine. The segment at glutamate 690–tryptophan 901 is disordered. A Phosphothreonine modification is found at threonine 724. Positions proline 757 to threonine 769 are enriched in acidic residues. Composition is skewed to basic and acidic residues over residues glutamate 813–glutamate 825 and alanine 835–glutamate 849. Acidic residues predominate over residues glycine 857–glycine 892. The chain crosses the membrane as a helical span at residues glutamine 908–valine 928. Topologically, residues arginine 929 to lysine 935 are extracellular. A helical membrane pass occupies residues phenylalanine 936–valine 956. Residues tryptophan 957 to glutamate 971 are Cytoplasmic-facing. The helical transmembrane segment at isoleucine 972–isoleucine 992 threads the bilayer. Residues alanine 979 to asparagine 1010 form an Alpha-2 repeat. The Extracellular portion of the chain corresponds to valine 993–asparagine 1010. A helical transmembrane segment spans residues isoleucine 1011–leucine 1031. Topologically, residues glutamine 1032 to asparagine 1039 are cytoplasmic. Residues glycine 1040–alanine 1060 form a helical membrane-spanning segment. Over serine 1061–lysine 1068 the chain is Extracellular. Residues isoleucine 1069 to glutamate 1089 traverse the membrane as a helical segment. Residues aspartate 1090–valine 1099 are Cytoplasmic-facing.

This sequence belongs to the Ca(2+):cation antiporter (CaCA) (TC 2.A.19) family. SLC24A subfamily. The uncleaved signal sequence is required for efficient membrane targeting and proper membrane integration. In terms of tissue distribution, expressed in the retina, particularly in the inner segment, outer and inner nuclear layers, and ganglion cell layer.

The protein resides in the cell membrane. It catalyses the reaction Ca(2+)(out) + K(+)(out) + 4 Na(+)(in) = Ca(2+)(in) + K(+)(in) + 4 Na(+)(out). Its function is as follows. Calcium, potassium:sodium antiporter that transports 1 Ca(2+) and 1 K(+) in exchange for 4 Na(+). Critical component of the visual transduction cascade, controlling the calcium concentration of outer segments during light and darkness. Light causes a rapid lowering of cytosolic free calcium in the outer segment of both retinal rod and cone photoreceptors and the light-induced lowering of calcium is caused by extrusion via this protein which plays a key role in the process of light adaptation. The chain is Sodium/potassium/calcium exchanger 1 from Homo sapiens (Human).